The following is a 382-amino-acid chain: Proton extrusion protein PxcA (382 aa).

Transmembrane regions (helical) follow at residues 162–182 (VLLLLVLVPLLVSQISGTYLI), 257–277 (AIKNVFADLAGLIAFAVVCLM), 305–325 (IILFTDIFVGYHSPEGWSVLL), and 340–360 (FVNLFIATFPVVLATIFKYWI).

It belongs to the CemA family.

It localises to the cell inner membrane. Functionally, required for H(+) efflux immediately after light irradiation to form a rapid H(+) concentration gradient across the thylakoid membranes. Together with PxcL, contributes to transient H(+) uptake following dark to light transition. This chain is Proton extrusion protein PxcA, found in Synechococcus sp. (strain CC9605).